The following is a 255-amino-acid chain: Electron transfer flavoprotein subunit beta (255 aa).

N-acetylalanine is present on Ala-2. Residues Ala-9, 39-42, Cys-66, and 123-134 each bind AMP; these read NPFC and GKQAIDDDCNQT. The segment at 183–205 is recognition loop; that stretch reads ADLRLNEPRYATLPNIMKAKKKK. The residue at position 200 (Lys-200) is an N6,N6,N6-trimethyllysine; by ETFBKMT; alternate. Lys-200 is modified (N6-acetyllysine; alternate). An N6-methyllysine; alternate modification is found at Lys-200. Residue Lys-203 is modified to N6,N6,N6-trimethyllysine; by ETFBKMT. Lys-210 is subject to N6-acetyllysine; alternate. Lys-210 carries the post-translational modification N6-succinyllysine; alternate. Phosphoserine is present on residues Ser-223 and Ser-226. The residue at position 238 (Lys-238) is an N6-acetyllysine. Lys-248 is modified (N6-acetyllysine; alternate). Lys-248 is subject to N6-succinyllysine; alternate.

This sequence belongs to the ETF beta-subunit/FixA family. As to quaternary structure, heterodimer composed of ETFA and ETFB. Identified in a complex that contains ETFA, ETFB and ETFRF1. Interacts with ACADM. Methylated. Trimethylation at Lys-200 and Lys-203 may negatively regulate the activity in electron transfer from acyl-CoA dehydrogenases.

The protein localises to the mitochondrion matrix. Heterodimeric electron transfer flavoprotein that accepts electrons from several mitochondrial dehydrogenases, including acyl-CoA dehydrogenases, glutaryl-CoA and sarcosine dehydrogenase. It transfers the electrons to the main mitochondrial respiratory chain via ETF-ubiquinone oxidoreductase. Required for normal mitochondrial fatty acid oxidation and normal amino acid metabolism. ETFB binds an AMP molecule that probably has a purely structural role. This chain is Electron transfer flavoprotein subunit beta, found in Mus musculus (Mouse).